Reading from the N-terminus, the 349-residue chain is Isopentenyl-diphosphate delta-isomerase (349 aa).

Arginine 6–lysine 7 is a binding site for substrate. FMN is bound by residues alanine 62–threonine 64, serine 93, and asparagine 122. Glutamine 152 lines the substrate pocket. Glutamate 153 contacts Mg(2+). Residues lysine 184, threonine 214, glycine 259–arginine 261, and alanine 280–glycine 281 contribute to the FMN site.

Belongs to the IPP isomerase type 2 family. Homooctamer. Dimer of tetramers. It depends on FMN as a cofactor. Requires NADPH as cofactor. Mg(2+) serves as cofactor.

The protein resides in the cytoplasm. It carries out the reaction isopentenyl diphosphate = dimethylallyl diphosphate. Involved in the biosynthesis of isoprenoids. Catalyzes the 1,3-allylic rearrangement of the homoallylic substrate isopentenyl (IPP) to its allylic isomer, dimethylallyl diphosphate (DMAPP). The protein is Isopentenyl-diphosphate delta-isomerase of Geobacillus sp. (strain WCH70).